Reading from the N-terminus, the 173-residue chain is Photosystem I assembly protein Ycf3 (173 aa).

TPR repeat units follow at residues 35-68, 72-105, and 120-153; these read AYIY…EENK, GETL…NPKQ, and GRNA…YPGG.

It belongs to the Ycf3 family.

Its subcellular location is the cellular thylakoid membrane. Its function is as follows. Essential for the assembly of the photosystem I (PSI) complex. May act as a chaperone-like factor to guide the assembly of the PSI subunits. The sequence is that of Photosystem I assembly protein Ycf3 from Prochlorococcus marinus (strain MIT 9301).